The primary structure comprises 133 residues: Small ribosomal subunit protein uS8 (133 aa).

The protein belongs to the universal ribosomal protein uS8 family. As to quaternary structure, part of the 30S ribosomal subunit. Contacts proteins S5 and S12.

In terms of biological role, one of the primary rRNA binding proteins, it binds directly to 16S rRNA central domain where it helps coordinate assembly of the platform of the 30S subunit. This Trichodesmium erythraeum (strain IMS101) protein is Small ribosomal subunit protein uS8.